The following is a 118-amino-acid chain: Cycloviolacin-O11 (118 aa).

The N-terminal stretch at 1–22 is a signal peptide; it reads MEMKNMVVGLFLIAAFALPALA. The propeptide occupies 23-84; the sequence is TSFEKDFITH…THSNSINALG (62 aa). The segment at residues 85-115 is a cross-link (cyclopeptide (Gly-Asn)); sequence GTLPCGESCVWIPCISAVVGCSCKSKVCYKN. Disulfide bonds link Cys89/Cys105, Cys93/Cys107, and Cys98/Cys112. Positions 116–118 are excised as a propeptide; sequence SLA.

In terms of processing, cycloviolacin-O11 is a cyclic peptide. As to expression, expressed in leaves, petals and petioles but not in roots and runners (at protein level).

In terms of biological role, probably participates in a plant defense mechanism. In Viola odorata (Sweet violet), this protein is Cycloviolacin-O11 (Voc2).